Consider the following 410-residue polypeptide: Pyrophosphate--fructose 6-phosphate 1-phosphotransferase (410 aa).

Residue G12 participates in diphosphate binding. Residue D121 coordinates Mg(2+). Residues 149–151 (TID), 194–196 (MGR), E266, and 323–326 (YFSR) each bind substrate. D151 (proton acceptor) is an active-site residue.

Belongs to the phosphofructokinase type A (PFKA) family. PPi-dependent PFK group II subfamily. Clade 'P' sub-subfamily. Homodimer or homotetramer. It depends on Mg(2+) as a cofactor.

The protein localises to the cytoplasm. It carries out the reaction beta-D-fructose 6-phosphate + diphosphate = beta-D-fructose 1,6-bisphosphate + phosphate + H(+). Its pathway is carbohydrate degradation; glycolysis; D-glyceraldehyde 3-phosphate and glycerone phosphate from D-glucose: step 3/4. Its activity is regulated as follows. Non-allosteric. In terms of biological role, catalyzes the phosphorylation of D-fructose 6-phosphate, the first committing step of glycolysis. Uses inorganic phosphate (PPi) as phosphoryl donor instead of ATP like common ATP-dependent phosphofructokinases (ATP-PFKs), which renders the reaction reversible, and can thus function both in glycolysis and gluconeogenesis. Consistently, PPi-PFK can replace the enzymes of both the forward (ATP-PFK) and reverse (fructose-bisphosphatase (FBPase)) reactions. The polypeptide is Pyrophosphate--fructose 6-phosphate 1-phosphotransferase (Mastigamoeba balamuthi (Phreatamoeba balamuthi)).